The primary structure comprises 227 residues: E3 ubiquitin-protein ligase ZNRF1 (227 aa).

Residues 1 to 42 are disordered; it reads MGGKQSTAARSRGPFPGVSTDDSAVPPPGGAPHFGHYRTGGG. Residue Gly-2 is the site of N-myristoyl glycine attachment. Positions 2 to 10 are required for endosomal and lysosomal localization and myristoylation; that stretch reads GGKQSTAAR. Residues Ser-50, Ser-52, and Ser-53 each carry the phosphoserine modification. Residues 68-105 form a disordered region; that stretch reads PFGLYTPASRGTGDSERAPGGGGSASDSTYAHGNGYQE. Tyr-103 carries the post-translational modification Phosphotyrosine; by SRC. Phosphoserine is present on Ser-123. The RING-type; atypical zinc-finger motif lies at 184–225; it reads CVICLEELLQGDTIARLPCLCIYHKSCIDSWFEVNRSCPEHP.

As to quaternary structure, interacts with AKT1, GLUL and TUBB2A. Interacts with ZNRF2. Interacts (via its RING domain) with UBE2N. Interacts (when phosphorylated) with YWHAE. N-myristoylation targets ZNRF1 to intracellular membranes. Post-translationally, phosphorylated by SRC at Tyr-103; leading to 'Lys-63'-linked ubiquitination of TLR3, lysosomal trafficking and degradation. As to expression, expressed primarily in the nervous system, with expression higher in developing brain relative to adult. Expressed at low levels in testis and thymus.

Its subcellular location is the endosome. The protein resides in the lysosome. It is found in the membrane. The protein localises to the cytoplasmic vesicle. It localises to the secretory vesicle. Its subcellular location is the synaptic vesicle membrane. It catalyses the reaction S-ubiquitinyl-[E2 ubiquitin-conjugating enzyme]-L-cysteine + [acceptor protein]-L-lysine = [E2 ubiquitin-conjugating enzyme]-L-cysteine + N(6)-ubiquitinyl-[acceptor protein]-L-lysine.. The protein operates within protein modification; protein ubiquitination. Its function is as follows. E3 ubiquitin-protein ligase that plays a role in different processes including cell differentiation, receptor recycling or regulation of inflammation. Mediates the ubiquitination of AKT1 and GLUL, thereby playing a role in neuron cells differentiation. Plays a role in the establishment and maintenance of neuronal transmission and plasticity. Regulates Schwann cells differentiation by mediating ubiquitination of GLUL. Promotes neurodegeneration by mediating 'Lys-48'-linked polyubiquitination and subsequent degradation of AKT1 in axons: degradation of AKT1 prevents AKT1-mediated phosphorylation of GSK3B, leading to GSK3B activation and phosphorylation of DPYSL2/CRMP2 followed by destabilization of microtubule assembly in axons. Ubiquitinates the Na(+)/K(+) ATPase alpha-1 subunit/ATP1A1 and thereby influences its endocytosis and/or degradation. Controls ligand-induced EGFR signaling via mediating receptor ubiquitination and recruitment of the ESCRT machinery. Acts as a negative feedback mechanism controlling TLR3 trafficking by mediating TLR3 'Lys-63'-linked polyubiquitination to reduce type I IFN production. Modulates inflammation by promoting caveolin-1/CAV1 ubiquitination and degradation to regulate TLR4-activated immune response. The polypeptide is E3 ubiquitin-protein ligase ZNRF1 (ZNRF1) (Homo sapiens (Human)).